Here is a 1057-residue protein sequence, read N- to C-terminus: Carbamoyl phosphate synthase large chain (1057 aa).

The segment at 1–401 is carboxyphosphate synthetic domain; sequence MPKRDDIQTI…SLLKAIRSLE (401 aa). Residues arginine 129, arginine 169, glycine 175, glycine 176, lysine 208, isoleucine 210, glutamate 215, glycine 241, isoleucine 242, histidine 243, glutamine 284, and glutamate 298 each contribute to the ATP site. One can recognise an ATP-grasp 1 domain in the interval 133–327; the sequence is RSLMNDLNVP…IAKLAAKIAV (195 aa). 3 residues coordinate Mg(2+): glutamine 284, glutamate 298, and asparagine 300. Residues glutamine 284, glutamate 298, and asparagine 300 each coordinate Mn(2+). Residues 402-546 form an oligomerization domain region; it reads YGVHHLGLPN…YGTYETENES (145 aa). Positions 547–929 are carbamoyl phosphate synthetic domain; the sequence is IVTDKEKILV…ALYKGLTGSG (383 aa). An ATP-grasp 2 domain is found at 671–861; the sequence is EALLHTIDVP…MAQLAMQAIM (191 aa). 10 residues coordinate ATP: arginine 707, arginine 746, leucine 748, glutamate 752, glycine 777, valine 778, histidine 779, serine 780, glutamine 820, and glutamate 832. Mg(2+) contacts are provided by glutamine 820, glutamate 832, and asparagine 834. Mn(2+) contacts are provided by glutamine 820, glutamate 832, and asparagine 834. In terms of domain architecture, MGS-like spans 930-1057; the sequence is VEVKDHGTVL…ESMTFSMRTM (128 aa). The allosteric domain stretch occupies residues 930–1057; the sequence is VEVKDHGTVL…ESMTFSMRTM (128 aa).

The protein belongs to the CarB family. As to quaternary structure, composed of two chains; the small (or glutamine) chain promotes the hydrolysis of glutamine to ammonia, which is used by the large (or ammonia) chain to synthesize carbamoyl phosphate. Tetramer of heterodimers (alpha,beta)4. The cofactor is Mg(2+). It depends on Mn(2+) as a cofactor.

The enzyme catalyses hydrogencarbonate + L-glutamine + 2 ATP + H2O = carbamoyl phosphate + L-glutamate + 2 ADP + phosphate + 2 H(+). The catalysed reaction is hydrogencarbonate + NH4(+) + 2 ATP = carbamoyl phosphate + 2 ADP + phosphate + 2 H(+). The protein operates within amino-acid biosynthesis; L-arginine biosynthesis; carbamoyl phosphate from bicarbonate: step 1/1. Its pathway is pyrimidine metabolism; UMP biosynthesis via de novo pathway; (S)-dihydroorotate from bicarbonate: step 1/3. Functionally, large subunit of the glutamine-dependent carbamoyl phosphate synthetase (CPSase). CPSase catalyzes the formation of carbamoyl phosphate from the ammonia moiety of glutamine, carbonate, and phosphate donated by ATP, constituting the first step of 2 biosynthetic pathways, one leading to arginine and/or urea and the other to pyrimidine nucleotides. The large subunit (synthetase) binds the substrates ammonia (free or transferred from glutamine from the small subunit), hydrogencarbonate and ATP and carries out an ATP-coupled ligase reaction, activating hydrogencarbonate by forming carboxy phosphate which reacts with ammonia to form carbamoyl phosphate. This is Carbamoyl phosphate synthase large chain from Staphylococcus haemolyticus (strain JCSC1435).